The sequence spans 261 residues: Cytochrome c oxidase subunit 3 (261 aa).

The Mitochondrial matrix portion of the chain corresponds to 1–15; that stretch reads MTHQTHAYHMVNPSP. The chain crosses the membrane as a helical span at residues 16–34; the sequence is WPLTGALSALLMTSGLAMW. Residues 35-40 lie on the Mitochondrial intermembrane side of the membrane; that stretch reads FHFNST. The helical transmembrane segment at 41–66 threads the bilayer; it reads LLLAMGLLTNILTMYQWWRDIIREST. The Mitochondrial matrix segment spans residues 67–72; it reads FQGHHT. Residues 73–105 form a helical membrane-spanning segment; sequence SIVQKGLRYGMILFIISEVFFFSGFFWAFYHSS. The Mitochondrial intermembrane portion of the chain corresponds to 106 to 128; the sequence is LAPTPELGGCWPPTGIHPLNPLE. Residues 129–152 form a helical membrane-spanning segment; it reads VPLLNTSVLLASGVSITWAHHSLM. Residues 153–155 lie on the Mitochondrial matrix side of the membrane; sequence EGN. The helical transmembrane segment at 156 to 183 threads the bilayer; the sequence is RKNMLQGLFITISLGVYFTLLQASEYYE. Topologically, residues 184 to 190 are mitochondrial intermembrane; sequence ASFTISD. A helical membrane pass occupies residues 191-223; the sequence is GVYGSTFFVATGFHGLHVIIGSTFLIVCFLRQL. Over 224–232 the chain is Mitochondrial matrix; that stretch reads KFHFTSSHH. Residues 233–256 form a helical membrane-spanning segment; sequence FGFEAAAWYWHFVDVVWLFLYVSI. At 257–261 the chain is on the mitochondrial intermembrane side; the sequence is YWWGS.

Belongs to the cytochrome c oxidase subunit 3 family. Component of the cytochrome c oxidase (complex IV, CIV), a multisubunit enzyme composed of 14 subunits. The complex is composed of a catalytic core of 3 subunits MT-CO1, MT-CO2 and MT-CO3, encoded in the mitochondrial DNA, and 11 supernumerary subunits COX4I, COX5A, COX5B, COX6A, COX6B, COX6C, COX7A, COX7B, COX7C, COX8 and NDUFA4, which are encoded in the nuclear genome. The complex exists as a monomer or a dimer and forms supercomplexes (SCs) in the inner mitochondrial membrane with NADH-ubiquinone oxidoreductase (complex I, CI) and ubiquinol-cytochrome c oxidoreductase (cytochrome b-c1 complex, complex III, CIII), resulting in different assemblies (supercomplex SCI(1)III(2)IV(1) and megacomplex MCI(2)III(2)IV(2)).

The protein localises to the mitochondrion inner membrane. It carries out the reaction 4 Fe(II)-[cytochrome c] + O2 + 8 H(+)(in) = 4 Fe(III)-[cytochrome c] + 2 H2O + 4 H(+)(out). Functionally, component of the cytochrome c oxidase, the last enzyme in the mitochondrial electron transport chain which drives oxidative phosphorylation. The respiratory chain contains 3 multisubunit complexes succinate dehydrogenase (complex II, CII), ubiquinol-cytochrome c oxidoreductase (cytochrome b-c1 complex, complex III, CIII) and cytochrome c oxidase (complex IV, CIV), that cooperate to transfer electrons derived from NADH and succinate to molecular oxygen, creating an electrochemical gradient over the inner membrane that drives transmembrane transport and the ATP synthase. Cytochrome c oxidase is the component of the respiratory chain that catalyzes the reduction of oxygen to water. Electrons originating from reduced cytochrome c in the intermembrane space (IMS) are transferred via the dinuclear copper A center (CU(A)) of subunit 2 and heme A of subunit 1 to the active site in subunit 1, a binuclear center (BNC) formed by heme A3 and copper B (CU(B)). The BNC reduces molecular oxygen to 2 water molecules using 4 electrons from cytochrome c in the IMS and 4 protons from the mitochondrial matrix. This Equus caballus (Horse) protein is Cytochrome c oxidase subunit 3 (MT-CO3).